The chain runs to 45 residues: uncharacterized protein (45 aa).

An N-terminal signal peptide occupies residues 1 to 19; sequence MTFQILFLFVFHFVYIFRA.

This is an uncharacterized protein from Saccharomyces cerevisiae (strain ATCC 204508 / S288c) (Baker's yeast).